We begin with the raw amino-acid sequence, 108 residues long: FK506-binding protein 1 (108 aa).

The region spanning 20-108 (GDAVTIHYVG…VFDVELLGIN (89 aa)) is the PPIase FKBP-type domain.

Belongs to the FKBP-type PPIase family. FKBP1 subfamily.

It is found in the cytoplasm. The enzyme catalyses [protein]-peptidylproline (omega=180) = [protein]-peptidylproline (omega=0). Its activity is regulated as follows. Inhibited by both FK506 and rapamycin. Functionally, PPIases accelerate the folding of proteins. It catalyzes the cis-trans isomerization of proline imidic peptide bonds in oligopeptides. This Yarrowia lipolytica (strain CLIB 122 / E 150) (Yeast) protein is FK506-binding protein 1 (FPR1).